The following is a 200-amino-acid chain: MDRVAGQVNSRRGELLELAAAMFAERGLRATTVRDIADGAGILSGSLYHHFASKEEMVDELLRGFLDWLFARYRDIVDSTANPLERLQGLFMASFEAIEHHHAQVVIYQDEAQRLASQPRFSYIEDRNKQQRKMWVDVLNQGIEEGYFRPDLDVDLVYRFIRDTTWVSVRWYRPGGPLTAQQVGQQYLAIVLGGITKEGV.

The HTH tetR-type domain maps to 9–69 (NSRRGELLEL…ELLRGFLDWL (61 aa)). A DNA-binding region (H-T-H motif) is located at residues 32 to 51 (TVRDIADGAGILSGSLYHHF).

As to quaternary structure, homodimer.

Its function is as follows. Controls the expression of a small regulon that may play a role in the utilization of cholesterol. The sequence is that of HTH-type transcriptional repressor KstR2 (kstR2) from Mycobacterium tuberculosis (strain CDC 1551 / Oshkosh).